We begin with the raw amino-acid sequence, 409 residues long: NDP-glycosyltransferase ltbB (409 aa).

The N-linked (GlcNAc...) asparagine glycan is linked to asparagine 36. Residues 319–339 traverse the membrane as a helical segment; the sequence is IWAFAYVWAWLQTLYTAPWIA.

It belongs to the GT2 glycosyltransferase family.

The protein localises to the membrane. It participates in secondary metabolite biosynthesis. Functionally, NDP-glycosyltransferase; part of the gene cluster that mediates the biosynthesis of luteodienoside A, a glycosylated polyketide consisting of an unusual 1-O-beta-D-glucopyranosyl-myo-inositol (glucinol) ester of 3-hydroxy-2,2,4-trimethylocta-4,6-dienoic acid. LtbB likely serves as a glucinol synthase by transferring D-glucose to myo-inositol using NDP-glucose as a substrate. The ltbA carnitine O-acyltransferase (cAT) domain uses glucinol produced by the glycosyltransferase ltbB as an offloading substrate to release luteodienoside A from the HR-PKS. Since ltbA and ltbB are sufficient for the biosynthesis of luteodienoside A, the functions of the methyltransferase ltbC and the FAD-binding monooxygenase ltbD within the pathway remain obscur. The polypeptide is NDP-glycosyltransferase ltbB (Aspergillus luteorubrus).